The primary structure comprises 608 residues: 2',5'-phosphodiesterase 12 (608 aa).

A mitochondrion-targeting transit peptide spans 1–16 (MWRLPGRSALRGVRSV). Residues 90 to 99 (AAKKSRKNRA) show a composition bias toward basic residues. Positions 90–111 (AAKKSRKNRAHSSGGAACEATG) are disordered. Ser216 carries the post-translational modification Phosphoserine. Positions 350, 495, and 497 each coordinate Mg(2+). Asp495 (proton donor/acceptor) is an active-site residue.

This sequence belongs to the CCR4/nocturin family. Mg(2+) is required as a cofactor.

It localises to the mitochondrion matrix. The enzyme catalyses Exonucleolytic cleavage of poly(A) to 5'-AMP.. In terms of biological role, enzyme that cleaves 2',5'-phosphodiester bond linking adenosines of the 5'-triphosphorylated oligoadenylates, triphosphorylated oligoadenylates referred as 2-5A modulates the 2-5A system. Degrades triphosphorylated 2-5A to produce AMP and ATP. Also cleaves 3',5'-phosphodiester bond of oligoadenylates. Plays a role as a negative regulator of the 2-5A system that is one of the major pathways for antiviral and antitumor functions induced by interferons (IFNs). Suppression of this enzyme increases cellular 2-5A levels and decreases viral replication in cultured small-airway epithelial cells. This chain is 2',5'-phosphodiesterase 12 (Pde12), found in Mus musculus (Mouse).